The chain runs to 510 residues: UDP-N-acetylmuramoyl-tripeptide--D-alanyl-D-alanine ligase (510 aa).

136–142 (GSSGKTS) lines the ATP pocket.

This sequence belongs to the MurCDEF family. MurF subfamily.

It is found in the cytoplasm. It carries out the reaction D-alanyl-D-alanine + UDP-N-acetyl-alpha-D-muramoyl-L-alanyl-gamma-D-glutamyl-meso-2,6-diaminopimelate + ATP = UDP-N-acetyl-alpha-D-muramoyl-L-alanyl-gamma-D-glutamyl-meso-2,6-diaminopimeloyl-D-alanyl-D-alanine + ADP + phosphate + H(+). The protein operates within cell wall biogenesis; peptidoglycan biosynthesis. Functionally, involved in cell wall formation. Catalyzes the final step in the synthesis of UDP-N-acetylmuramoyl-pentapeptide, the precursor of murein. The protein is UDP-N-acetylmuramoyl-tripeptide--D-alanyl-D-alanine ligase of Mycobacterium bovis (strain ATCC BAA-935 / AF2122/97).